Reading from the N-terminus, the 304-residue chain is Phosphoribosylaminoimidazole-succinocarboxamide synthase (304 aa).

Belongs to the SAICAR synthetase family.

It carries out the reaction 5-amino-1-(5-phospho-D-ribosyl)imidazole-4-carboxylate + L-aspartate + ATP = (2S)-2-[5-amino-1-(5-phospho-beta-D-ribosyl)imidazole-4-carboxamido]succinate + ADP + phosphate + 2 H(+). It functions in the pathway purine metabolism; IMP biosynthesis via de novo pathway; 5-amino-1-(5-phospho-D-ribosyl)imidazole-4-carboxamide from 5-amino-1-(5-phospho-D-ribosyl)imidazole-4-carboxylate: step 1/2. The polypeptide is Phosphoribosylaminoimidazole-succinocarboxamide synthase (Streptomyces griseus subsp. griseus (strain JCM 4626 / CBS 651.72 / NBRC 13350 / KCC S-0626 / ISP 5235)).